Consider the following 1380-residue polypeptide: DNA-directed RNA polymerase subunit beta (1380 aa).

Belongs to the RNA polymerase beta chain family. As to quaternary structure, the RNAP catalytic core consists of 2 alpha, 1 beta, 1 beta' and 1 omega subunit. When a sigma factor is associated with the core the holoenzyme is formed, which can initiate transcription.

It catalyses the reaction RNA(n) + a ribonucleoside 5'-triphosphate = RNA(n+1) + diphosphate. DNA-dependent RNA polymerase catalyzes the transcription of DNA into RNA using the four ribonucleoside triphosphates as substrates. This chain is DNA-directed RNA polymerase subunit beta, found in Nitrobacter winogradskyi (strain ATCC 25391 / DSM 10237 / CIP 104748 / NCIMB 11846 / Nb-255).